The chain runs to 331 residues: NADH-quinone oxidoreductase subunit H (331 aa).

The next 9 helical transmembrane spans lie at 5 to 25 (LFFV…MASL), 45 to 65 (GPDM…IKLF), 78 to 98 (FIFL…LAPV), 122 to 142 (VLYI…AGLA), 156 to 176 (VVAL…VVMV), 192 to 212 (IFNW…MASF), 245 to 265 (FFIG…LLFL), 271 to 291 (FLFI…FFFF), and 311 to 331 (WKIL…ALLI).

It belongs to the complex I subunit 1 family. In terms of assembly, NDH-1 is composed of 14 different subunits. Subunits NuoA, H, J, K, L, M, N constitute the membrane sector of the complex.

Its subcellular location is the cell inner membrane. It catalyses the reaction a quinone + NADH + 5 H(+)(in) = a quinol + NAD(+) + 4 H(+)(out). Functionally, NDH-1 shuttles electrons from NADH, via FMN and iron-sulfur (Fe-S) centers, to quinones in the respiratory chain. The immediate electron acceptor for the enzyme in this species is believed to be ubiquinone. Couples the redox reaction to proton translocation (for every two electrons transferred, four hydrogen ions are translocated across the cytoplasmic membrane), and thus conserves the redox energy in a proton gradient. This subunit may bind ubiquinone. The chain is NADH-quinone oxidoreductase subunit H from Campylobacter concisus (strain 13826).